The sequence spans 249 residues: Tryptophan synthase alpha chain (249 aa).

Active-site proton acceptor residues include E43 and D54.

The protein belongs to the TrpA family. As to quaternary structure, tetramer of two alpha and two beta chains.

It carries out the reaction (1S,2R)-1-C-(indol-3-yl)glycerol 3-phosphate + L-serine = D-glyceraldehyde 3-phosphate + L-tryptophan + H2O. Its pathway is amino-acid biosynthesis; L-tryptophan biosynthesis; L-tryptophan from chorismate: step 5/5. Its function is as follows. The alpha subunit is responsible for the aldol cleavage of indoleglycerol phosphate to indole and glyceraldehyde 3-phosphate. In Campylobacter jejuni subsp. jejuni serotype O:6 (strain 81116 / NCTC 11828), this protein is Tryptophan synthase alpha chain.